A 356-amino-acid polypeptide reads, in one-letter code: Histidinol-phosphate aminotransferase (356 aa).

K214 is modified (N6-(pyridoxal phosphate)lysine).

It belongs to the class-II pyridoxal-phosphate-dependent aminotransferase family. Histidinol-phosphate aminotransferase subfamily. Homodimer. The cofactor is pyridoxal 5'-phosphate.

The catalysed reaction is L-histidinol phosphate + 2-oxoglutarate = 3-(imidazol-4-yl)-2-oxopropyl phosphate + L-glutamate. It participates in amino-acid biosynthesis; L-histidine biosynthesis; L-histidine from 5-phospho-alpha-D-ribose 1-diphosphate: step 7/9. The chain is Histidinol-phosphate aminotransferase (hisC) from Escherichia coli O157:H7.